Reading from the N-terminus, the 274-residue chain is Penicillin-insensitive murein endopeptidase (274 aa).

The N-terminal stretch at 1-19 is a signal peptide; sequence MNKTAIALLALLASSASLA. Intrachain disulfides connect C44/C265, C187/C235, and C216/C223. Zn(2+) is bound by residues H110, H113, D120, D147, H150, and H211. The interval 227 to 274 is disordered; sequence PLPPPGDGCGAELQSWFEPPKPGTTKPEKKTPPPLPPSCQALLDEHVI.

This sequence belongs to the peptidase M74 family. In terms of assembly, dimer. It depends on Zn(2+) as a cofactor.

The protein resides in the periplasm. Murein endopeptidase that cleaves the D-alanyl-meso-2,6-diamino-pimelyl amide bond that connects peptidoglycan strands. Likely plays a role in the removal of murein from the sacculus. The protein is Penicillin-insensitive murein endopeptidase of Escherichia coli O6:K15:H31 (strain 536 / UPEC).